Reading from the N-terminus, the 776-residue chain is DNA ligase (776 aa).

Residues 31 to 35 (DAEYD) and 80 to 81 (SL) contribute to the NAD(+) site. Residue lysine 114 is the N6-AMP-lysine intermediate of the active site. Arginine 135, glutamate 172, lysine 288, and lysine 312 together coordinate NAD(+). Zn(2+)-binding residues include cysteine 406, cysteine 409, cysteine 436, and cysteine 442. Residues 693–776 (AEGLPLAGQT…TFLAEQGIVV (84 aa)) enclose the BRCT domain.

This sequence belongs to the NAD-dependent DNA ligase family. LigA subfamily. Requires Mg(2+) as cofactor. Mn(2+) serves as cofactor.

It carries out the reaction NAD(+) + (deoxyribonucleotide)n-3'-hydroxyl + 5'-phospho-(deoxyribonucleotide)m = (deoxyribonucleotide)n+m + AMP + beta-nicotinamide D-nucleotide.. Its function is as follows. DNA ligase that catalyzes the formation of phosphodiester linkages between 5'-phosphoryl and 3'-hydroxyl groups in double-stranded DNA using NAD as a coenzyme and as the energy source for the reaction. It is essential for DNA replication and repair of damaged DNA. In Pseudomonas putida (strain GB-1), this protein is DNA ligase.